A 480-amino-acid chain; its full sequence is DnaJ homolog subfamily A member 3, mitochondrial (480 aa).

At Arg-58 the chain carries Omega-N-methylarginine; by CARM1. Positions 93-158 (DYYQILGVPR…VKRKQYDAYG (66 aa)) constitute a J domain. At Lys-134 the chain carries N6-acetyllysine. The CR-type zinc-finger motif lies at 223–301 (GVNKEFTVNI…CRGAGQAKQK (79 aa)). Zn(2+) is bound at residue Cys-236. CXXCXGXG motif repeat units follow at residues 236–243 (CERCNGKG), 253–260 (CHYCGGSG), 275–282 (CRRCGGRG), and 289–296 (CVVCRGAG). Omega-N-methylarginine; by CARM1 is present on Arg-238. Zn(2+)-binding residues include Cys-239, Cys-253, Cys-256, Cys-275, Cys-278, Cys-289, and Cys-292. Arg-293 carries the post-translational modification Omega-N-methylarginine; by CARM1. Ser-398 is subject to Phosphoserine. Residues 443 to 456 (LTSSGGSTMDSSAG) show a composition bias toward polar residues. The tract at residues 443-471 (LTSSGGSTMDSSAGSKARREAGEDEEGFL) is disordered.

In terms of assembly, interacts with JAK2, HSPA9B and IFN-gammaR2 chain. Interacts with Ras GTPase-activating protein 1 (RASA1). Isoform 2 interacts with MUSK (via the cytoplasmic domain). In terms of processing, tyrosine phosphorylated. Widely expressed with highest levels in heart, liver, lung and skeletal muscles. Also expressed in keratinocytes; expression level and distribution is altered in basal cell carcinomas.

It localises to the mitochondrion matrix. Its subcellular location is the cytoplasm. The protein localises to the cytosol. The protein resides in the postsynaptic cell membrane. Functionally, modulates apoptotic signal transduction or effector structures within the mitochondrial matrix. Affect cytochrome C release from the mitochondria and caspase 3 activation, but not caspase 8 activation. Isoform 1 increases apoptosis triggered by both TNF and the DNA-damaging agent mytomycin C; in sharp contrast, isoform 2 suppresses apoptosis. Can modulate IFN-gamma-mediated transcriptional activity. Isoform 2 may play a role in neuromuscular junction development as an effector of the MUSK signaling pathway. The sequence is that of DnaJ homolog subfamily A member 3, mitochondrial (DNAJA3) from Homo sapiens (Human).